A 502-amino-acid chain; its full sequence is Protein krueppel (502 aa).

Disordered regions lie at residues 115–164 (PPQG…KLSV) and 178–202 (DMYH…THDG). 2 stretches are compositionally biased toward low complexity: residues 119 to 136 (THLH…STPL) and 183 to 198 (SGGP…SPNS). 5 C2H2-type zinc fingers span residues 222-244 (FTCK…ERTH), 250-272 (FECP…MRLH), 278-300 (YHCS…LRVH), 306-328 (YTCE…MLVH), and 334-354 (FECE…NHKC). Disordered stretches follow at residues 399 to 427 (NESV…SVDG) and 445 to 502 (RLPP…HQQH). Residues 410-419 (EDDGPLDLSE) show a composition bias toward acidic residues. Ser468, Ser471, and Ser477 each carry phosphoserine. The segment covering 482 to 491 (DDIDLYDLDD) has biased composition (acidic residues).

The protein belongs to the krueppel C2H2-type zinc-finger protein family.

The protein resides in the nucleus. In terms of biological role, krueppel is a gap class segmentation protein. It is involved in the segmentation of the embryo and in the differentiation of the Malpighian tubules. The polypeptide is Protein krueppel (Kr) (Drosophila melanogaster (Fruit fly)).